The following is a 552-amino-acid chain: uncharacterized protein (552 aa).

4 consecutive transmembrane segments (helical) span residues 127 to 147 (AIML…ISLL), 160 to 180 (LIIV…YINI), 393 to 413 (LTKQ…LSAV), and 517 to 537 (VIDS…FICI).

It localises to the membrane. This is an uncharacterized protein from Saccharomyces cerevisiae (strain ATCC 204508 / S288c) (Baker's yeast).